A 119-amino-acid polypeptide reads, in one-letter code: Platelet basic protein (119 aa).

The first 33 residues, 1–33, serve as a signal peptide directing secretion; it reads MSLRLGAISSCTTSSPFPVLQVLLPLSLLLTTL. A propeptide spanning residues 34-39 is cleaved from the precursor; that stretch reads VPATMG. 2 cysteine pairs are disulfide-bonded: cysteine 54/cysteine 80 and cysteine 56/cysteine 96.

It is found in the secreted. Its function is as follows. Chemoattractant factor for neutrophils. This chain is Platelet basic protein (PPBP), found in Sus scrofa (Pig).